The following is a 126-amino-acid chain: Probable DNA-directed RNA polymerase II subunit RPB11 (126 aa).

This sequence belongs to the archaeal Rpo11/eukaryotic RPB11/RPC19 RNA polymerase subunit family. Component of the RNA polymerase II (Pol II) complex consisting of 12 subunits.

The protein localises to the nucleus. In terms of biological role, DNA-dependent RNA polymerase catalyzes the transcription of DNA into RNA using the four ribonucleoside triphosphates as substrates. Component of RNA polymerase II which synthesizes mRNA precursors and many functional non-coding RNAs. Pol II is the central component of the basal RNA polymerase II transcription machinery. It is composed of mobile elements that move relative to each other. RPB11 is part of the core element with the central large cleft. The protein is Probable DNA-directed RNA polymerase II subunit RPB11 of Plasmodium falciparum (isolate 3D7).